Reading from the N-terminus, the 491-residue chain is DEAD-box ATP-dependent RNA helicase 36 (491 aa).

The segment covering 1 to 10 (MEEPTPEEEG) has biased composition (acidic residues). The disordered stretch occupies residues 1–56 (MEEPTPEEEGGITIMSKSRKNPKTVVNIQSQKLDSDQNTPQFEKFTNPNPSSDTTS). The span at 24 to 56 (TVVNIQSQKLDSDQNTPQFEKFTNPNPSSDTTS) shows a compositional bias: polar residues. The Q motif signature appears at 58–86 (TNFEGLGLAEWAVETCKELGMRKPTPVQT). The region spanning 89–262 (VPKILAGRDV…EHSSNKAYFY (174 aa)) is the Helicase ATP-binding domain. 102 to 109 (AQTGSGKT) contributes to the ATP binding site. A DEAD box motif is present at residues 210–213 (DEAD). Residues 289-438 (YLVHILSQME…NKKVITDSLE (150 aa)) form the Helicase C-terminal domain. The tract at residues 471–491 (KTLADKGLLKKRGKRQKSTEN) is disordered. Residues 479-491 (LKKRGKRQKSTEN) show a composition bias toward basic residues.

This sequence belongs to the DEAD box helicase family. DDX49/DBP8 subfamily.

The enzyme catalyses ATP + H2O = ADP + phosphate + H(+). This chain is DEAD-box ATP-dependent RNA helicase 36 (RH36), found in Arabidopsis thaliana (Mouse-ear cress).